Here is a 68-residue protein sequence, read N- to C-terminus: ATP synthase protein 8 (68 aa).

A helical membrane pass occupies residues 8 to 24; that stretch reads VWPTIIMSMLLALFLLM. Lys-54 carries the post-translational modification N6-acetyllysine; alternate. Lys-54 is subject to N6-succinyllysine; alternate. The residue at position 57 (Lys-57) is an N6-acetyllysine.

The protein belongs to the ATPase protein 8 family. As to quaternary structure, F-type ATPases have 2 components, CF(1) - the catalytic core - and CF(0) - the membrane proton channel. Component of an ATP synthase complex composed of ATP5PB, ATP5MC1, ATP5F1E, ATP5PD, ATP5ME, ATP5PF, ATP5MF, MT-ATP6, MT-ATP8, ATP5F1A, ATP5F1B, ATP5F1D, ATP5F1C, ATP5PO, ATP5MG, ATP5MK and ATP5MJ. Interacts with PRICKLE3.

The protein resides in the mitochondrion membrane. In terms of biological role, mitochondrial membrane ATP synthase (F(1)F(0) ATP synthase or Complex V) produces ATP from ADP in the presence of a proton gradient across the membrane which is generated by electron transport complexes of the respiratory chain. F-type ATPases consist of two structural domains, F(1) - containing the extramembraneous catalytic core and F(0) - containing the membrane proton channel, linked together by a central stalk and a peripheral stalk. During catalysis, ATP synthesis in the catalytic domain of F(1) is coupled via a rotary mechanism of the central stalk subunits to proton translocation. Part of the complex F(0) domain. Minor subunit located with subunit a in the membrane. The protein is ATP synthase protein 8 (MT-ATP8) of Hylobates lar (Lar gibbon).